Here is a 947-residue protein sequence, read N- to C-terminus: Microtubule cross-linking factor 3 (947 aa).

An N-terminal signal peptide occupies residues Met-1–Ala-21. 3 disordered regions span residues Met-1 to Lys-251, Lys-266 to Asn-368, and Leu-496 to Asp-524. Composition is skewed to low complexity over residues Ala-9–Glu-24, Gln-72–Gln-81, and Ala-109–Gly-137. The span at Gly-141–Glu-151 shows a compositional bias: basic and acidic residues. Positions Gly-164 to Ser-180 are enriched in gly residues. Positions Ala-214–Ser-236 are enriched in low complexity. Positions Gly-237–Ser-248 are enriched in gly residues. Low complexity-rich tracts occupy residues Ser-287 to Pro-297 and Ala-304 to Ser-325. The stretch at His-342–Asn-726 forms a coiled coil. Composition is skewed to basic and acidic residues over residues Glu-355 to Asn-368 and Leu-496 to Ala-513. Ser-569 carries the post-translational modification Phosphoserine. Positions Gly-743–Val-786 are disordered. The segment covering Ser-747 to Pro-768 has biased composition (basic and acidic residues). The residue at position 781 (Ser-781) is a Phosphoserine. The stretch at Asp-811–Asp-835 forms a coiled coil. A helical membrane pass occupies residues Pro-915–Phe-935.

The protein belongs to the MTCL family.

The protein localises to the membrane. The sequence is that of Microtubule cross-linking factor 3 from Homo sapiens (Human).